A 451-amino-acid polypeptide reads, in one-letter code: ATP-dependent protease ATPase subunit HslU (451 aa).

Residues isoleucine 26, 68 to 73, aspartate 263, glutamate 328, and arginine 400 contribute to the ATP site; that span reads GVGKTE.

This sequence belongs to the ClpX chaperone family. HslU subfamily. A double ring-shaped homohexamer of HslV is capped on each side by a ring-shaped HslU homohexamer. The assembly of the HslU/HslV complex is dependent on binding of ATP.

The protein resides in the cytoplasm. Functionally, ATPase subunit of a proteasome-like degradation complex; this subunit has chaperone activity. The binding of ATP and its subsequent hydrolysis by HslU are essential for unfolding of protein substrates subsequently hydrolyzed by HslV. HslU recognizes the N-terminal part of its protein substrates and unfolds these before they are guided to HslV for hydrolysis. The chain is ATP-dependent protease ATPase subunit HslU from Dichelobacter nodosus (strain VCS1703A).